A 487-amino-acid polypeptide reads, in one-letter code: Malonate-semialdehyde dehydrogenase 2 (487 aa).

Residues Phe154, Lys178, Glu181, Arg182, and Ser231 each contribute to the NAD(+) site. The Nucleophile role is filled by Cys286. Residue Glu386 participates in NAD(+) binding.

Belongs to the aldehyde dehydrogenase family. IolA subfamily. In terms of assembly, homotetramer.

It carries out the reaction 3-oxopropanoate + NAD(+) + CoA + H2O = hydrogencarbonate + acetyl-CoA + NADH + H(+). The catalysed reaction is 2-methyl-3-oxopropanoate + NAD(+) + CoA + H2O = propanoyl-CoA + hydrogencarbonate + NADH + H(+). It functions in the pathway polyol metabolism; myo-inositol degradation into acetyl-CoA; acetyl-CoA from myo-inositol: step 7/7. Its function is as follows. Catalyzes the oxidation of malonate semialdehyde (MSA) and methylmalonate semialdehyde (MMSA) into acetyl-CoA and propanoyl-CoA, respectively. Is involved in a myo-inositol catabolic pathway. Bicarbonate, and not CO2, is the end-product of the enzymatic reaction. In Bacillus thuringiensis subsp. konkukian (strain 97-27), this protein is Malonate-semialdehyde dehydrogenase 2.